Here is a 91-residue protein sequence, read N- to C-terminus: Small ribosomal subunit protein uS19 (91 aa).

The protein belongs to the universal ribosomal protein uS19 family.

Its function is as follows. Protein S19 forms a complex with S13 that binds strongly to the 16S ribosomal RNA. This Psychrobacter arcticus (strain DSM 17307 / VKM B-2377 / 273-4) protein is Small ribosomal subunit protein uS19.